We begin with the raw amino-acid sequence, 194 residues long: ATP-dependent Clp protease proteolytic subunit (194 aa).

The Nucleophile role is filled by S97. H122 is an active-site residue.

The protein belongs to the peptidase S14 family. As to quaternary structure, fourteen ClpP subunits assemble into 2 heptameric rings which stack back to back to give a disk-like structure with a central cavity, resembling the structure of eukaryotic proteasomes.

It is found in the cytoplasm. It carries out the reaction Hydrolysis of proteins to small peptides in the presence of ATP and magnesium. alpha-casein is the usual test substrate. In the absence of ATP, only oligopeptides shorter than five residues are hydrolyzed (such as succinyl-Leu-Tyr-|-NHMec, and Leu-Tyr-Leu-|-Tyr-Trp, in which cleavage of the -Tyr-|-Leu- and -Tyr-|-Trp bonds also occurs).. Cleaves peptides in various proteins in a process that requires ATP hydrolysis. Has a chymotrypsin-like activity. Plays a major role in the degradation of misfolded proteins. In Campylobacter jejuni subsp. jejuni serotype O:23/36 (strain 81-176), this protein is ATP-dependent Clp protease proteolytic subunit.